The primary structure comprises 135 residues: Transcriptional activator protein (135 aa).

Residues 17-32 (KVTHRQVKKRAIRRRR) carry the Nuclear localization signal motif. A zinc finger spans residues 37 to 54 (CGCSYYLHINCFNHGFTH). Residues 77–88 (VFHNHQAPTTTI) show a composition bias toward polar residues. Positions 77–117 (VFHNHQAPTTTIPAEPGHHNSPGSIQSQPEEGAGDSQMFSQ) are disordered. The transactivation stretch occupies residues 120-135 (DLDNLTASDWSFLKGL).

The protein belongs to the geminiviridae transcriptional activator protein family. In terms of assembly, monomer. Homodimer. Homooligomer. Self-interaction correlates with nuclear localization and efficient activation of transcription. Monomers suppress local silencing by interacting with and inactivating host adenosine kinase 2 (ADK2) in the cytoplasm. Interacts with and inhibits host SNF1 kinase. Binds to ssDNA. Post-translationally, phosphorylated.

The protein resides in the host nucleus. It is found in the host cytoplasm. In terms of biological role, strong activator of the late viral genes promoters. Enhances the expression of the capsid protein and nuclear shuttle protein. Acts as a suppressor of RNA-mediated gene silencing, also known as post-transcriptional gene silencing (PTGS), a mechanism of plant viral defense that limits the accumulation of viral RNAs. Suppresses the host RNA silencing by inhibiting adenosine kinase 2 (ADK2), a kinase involved in a general methylation pathway. Also suppresses the host basal defense by interacting with and inhibiting SNF1 kinase, a key regulator of cell metabolism implicated in innate antiviral defense. Determines pathogenicity. The sequence is that of Transcriptional activator protein from Hewittia sublobata (Coralbush).